The chain runs to 255 residues: 3-hydroxyacyl-CoA dehydrogenase type-2 (255 aa).

NAD(+) is bound by residues Ser14, Leu16, Asp35, Asp58, Val59, and Cys85. Ser149 is a substrate binding site. Residues Tyr162, Lys166, Phe195, and Thr197 each contribute to the NAD(+) site. Tyr162 (proton acceptor) is an active-site residue.

This sequence belongs to the short-chain dehydrogenases/reductases (SDR) family. As to quaternary structure, component of mitochondrial ribonuclease P, a complex composed of rswl/MRPP1, scu/MRPP2 and mldr/MRPP3. In terms of tissue distribution, found in many tissues including CNS, imaginal disks and salivary glands. Highest expression in both embryonic gonadal primordia and mature ovaries and testes.

The protein resides in the mitochondrion. It catalyses the reaction a (3S)-3-hydroxyacyl-CoA + NAD(+) = a 3-oxoacyl-CoA + NADH + H(+). The enzyme catalyses (3S)-3-hydroxybutanoyl-CoA + NAD(+) = acetoacetyl-CoA + NADH + H(+). It carries out the reaction testosterone + NAD(+) = androst-4-ene-3,17-dione + NADH + H(+). The catalysed reaction is 5alpha-androstane-3alpha,17beta-diol + NAD(+) = 17beta-hydroxy-5alpha-androstan-3-one + NADH + H(+). It catalyses the reaction 17beta-estradiol + NAD(+) = estrone + NADH + H(+). The enzyme catalyses ursodeoxycholate + NAD(+) = 7-oxolithocholate + NADH + H(+). It carries out the reaction 3beta,7beta-dihydroxy-5beta-cholan-24-oate + NAD(+) = 3beta-hydroxy-7-oxo-5beta-cholan-24-oate + NADH + H(+). The catalysed reaction is 11-dehydrocorticosterone + NAD(+) = pregn-4-ene-3,11,20,21-tetraone + NADH + H(+). It catalyses the reaction cortisone + NAD(+) = 17alpha-hydroxypregn-4-en-3,11,20-trione-21-al + NADH + H(+). The enzyme catalyses cortisol + NAD(+) = 11beta,17alpha-dihydroxypregn-4-ene-3,20,21-trione + NADH + H(+). It carries out the reaction 5alpha-pregnan-20beta-ol-3-one + NAD(+) = 5alpha-pregnane-3,20-dione + NADH + H(+). The catalysed reaction is 17beta-hydroxy-5alpha-androstan-3-one + NAD(+) = 5alpha-androstan-3,17-dione + NADH + H(+). Functionally, mitochondrial dehydrogenase involved in pathways of fatty acid, and steroid metabolism. Versatile enzyme presenting two types of activity; L-3-hydroxyacyl-CoA dehydrogenase ((3S)-3-hydroxyacyl-CoA dehydrogenase) activity and hydroxysteroid dehydrogenase (HSD) activity with a wide substrate spectrum. As a (3S)-3-hydroxyacyl-CoA dehydrogenase, it functions in the third step of the fatty acid beta-oxidation pathway, a major metabolic process in which fatty acids are oxidized to provide a significant source of energy, while also generating acyl-CoA metabolites used by many metabolic routes. As a HSD, it functions in the degradation pathways of glucocorticoids and sex steroids and epimerization of bile acids; catalyzes the beta-oxidation at position 17 of androgens and estrogens, has 3-alpha-hydroxysteroid dehydrogenase activity with androsterone, and carries out oxidative conversions of 7-beta-hydroxylated bile acids like ursodeoxycholate or isoursodeoxycholate (also known as 3-beta,7-beta-dihydroxy-5-beta-cholan-24-oate or 7-beta-hydroxyisolithocholate, respectively). Also exhibits 20-beta-OH and 21-OH dehydrogenase activities with C21 steroids. Essential for structural and functional integrity of mitochondria. Required for cell survival during embryonic development. May play a role in germline formation. Its function is as follows. In addition to mitochondrial dehydrogenase activity, moonlights as a component of mitochondrial ribonuclease P, a complex that cleaves tRNA molecules in their 5'-ends. Essential for the structural and functional integrity of mitochondria. Function is essential for pupal development. This is 3-hydroxyacyl-CoA dehydrogenase type-2 from Drosophila melanogaster (Fruit fly).